Reading from the N-terminus, the 261-residue chain is Enoyl-[acyl-carrier-protein] reductase [NADH] FabI (261 aa).

NAD(+)-binding positions include glycine 15, 21 to 22 (SI), glutamine 42, 66 to 67 (DV), and methionine 94. Alanine 97 is a substrate binding site. Residues tyrosine 147 and tyrosine 157 each act as proton acceptor in the active site. NAD(+) is bound by residues lysine 164 and 193–197 (IKTLA).

It belongs to the short-chain dehydrogenases/reductases (SDR) family. FabI subfamily. As to quaternary structure, homotetramer.

It carries out the reaction a 2,3-saturated acyl-[ACP] + NAD(+) = a (2E)-enoyl-[ACP] + NADH + H(+). It functions in the pathway lipid metabolism; fatty acid biosynthesis. Catalyzes the reduction of a carbon-carbon double bond in an enoyl moiety that is covalently linked to an acyl carrier protein (ACP). Involved in the elongation cycle of fatty acid which are used in the lipid metabolism. This Rickettsia prowazekii (strain Madrid E) protein is Enoyl-[acyl-carrier-protein] reductase [NADH] FabI (fabI).